We begin with the raw amino-acid sequence, 196 residues long: Heat shock protein beta-8 (196 aa).

Phosphoserine is present on residues serine 24 and serine 57. Threonine 63 carries the phosphothreonine; by PKC; in vitro modification. An asymmetric dimethylarginine mark is found at arginine 71 and arginine 78. The region spanning 74–185 is the sHSP domain; it reads TATARFGVPA…TFGESSFNNE (112 aa). The segment at 176-196 is disordered; that stretch reads TFGESSFNNELPQDSQEVTCT. A compositionally biased stretch (polar residues) spans 177–196; that stretch reads FGESSFNNELPQDSQEVTCT.

Belongs to the small heat shock protein (HSP20) family. In terms of assembly, monomer. Forms a ternary complex with BAG3 and HSPA1A. Component of the chaperone-assisted selective autophagy (CASA) complex consisting of BAG3, HSPA8/HSC70, HSPB8 and STUB1/CHIP. Interacts with HSPB1. Interacts with DNAJB6. Interacts with BAG3. Predominantly expressed in skeletal muscle and heart.

It localises to the cytoplasm. Its subcellular location is the nucleus. Functionally, involved in the chaperone-assisted selective autophagy (CASA), a crucial process for protein quality control, particularly in mechanical strained cells and tissues such as muscle. Displays temperature-dependent chaperone activity. In Homo sapiens (Human), this protein is Heat shock protein beta-8 (HSPB8).